A 939-amino-acid chain; its full sequence is Valine--tRNA ligase (939 aa).

Residues 47 to 57 carry the 'HIGH' region motif; it reads PNVTGILHMGH. Positions 563–567 match the 'KMSKS' region motif; sequence KLSKS. An ATP-binding site is contributed by lysine 566. A coiled-coil region spans residues 874-939; the sequence is EHLAKERVRL…QSILDKLASL (66 aa).

Belongs to the class-I aminoacyl-tRNA synthetase family. ValS type 1 subfamily. As to quaternary structure, monomer.

Its subcellular location is the cytoplasm. The catalysed reaction is tRNA(Val) + L-valine + ATP = L-valyl-tRNA(Val) + AMP + diphosphate. Catalyzes the attachment of valine to tRNA(Val). As ValRS can inadvertently accommodate and process structurally similar amino acids such as threonine, to avoid such errors, it has a 'posttransfer' editing activity that hydrolyzes mischarged Thr-tRNA(Val) in a tRNA-dependent manner. This is Valine--tRNA ligase from Chlamydia trachomatis serovar A (strain ATCC VR-571B / DSM 19440 / HAR-13).